The primary structure comprises 324 residues: MSVEDGGMPGLGRPRQARWTLMLLLSTAMYGAHAPLLALCHVDGRVPFRPSSAVLLTELTKLLLCAFSLLVGWQAWPQGPPPWRQAAPFALSALLYGANNNLVIYLQRYMDPSTYQVLSNLKIGSTAVLYCLCLRHRLSVRQGLALLLLMAAGACYAAGGLQVPGNTLPSPPPAAAASPMPLHITPLGLLLLILYCLISGLSSVYTELLMKRQRLPLALQNLFLYTFGVLLNLGLHAGGGSGPGLLEGFSGWAALVVLSQALNGLLMSAVMKHGSSITRLFVVSCSLVVNAVLSAVLLRLQLTAAFFLATLLIGLAMRLYYGSR.

The Cytoplasmic portion of the chain corresponds to 1–18; the sequence is MSVEDGGMPGLGRPRQAR. A helical transmembrane segment spans residues 19–39; sequence WTLMLLLSTAMYGAHAPLLAL. At 40–52 the chain is on the lumenal side; sequence CHVDGRVPFRPSS. Residues 53-73 traverse the membrane as a helical segment; that stretch reads AVLLTELTKLLLCAFSLLVGW. Residues 74-85 are Cytoplasmic-facing; it reads QAWPQGPPPWRQ. Residues 86–106 traverse the membrane as a helical segment; the sequence is AAPFALSALLYGANNNLVIYL. Residues 107-142 lie on the Lumenal side of the membrane; that stretch reads QRYMDPSTYQVLSNLKIGSTAVLYCLCLRHRLSVRQ. A helical membrane pass occupies residues 143 to 163; the sequence is GLALLLLMAAGACYAAGGLQV. The Cytoplasmic segment spans residues 164–180; that stretch reads PGNTLPSPPPAAAASPM. The helical transmembrane segment at 181 to 201 threads the bilayer; the sequence is PLHITPLGLLLLILYCLISGL. Over 202–214 the chain is Lumenal; it reads SSVYTELLMKRQR. Residues 215–235 form a helical membrane-spanning segment; sequence LPLALQNLFLYTFGVLLNLGL. Residues 236-250 are Cytoplasmic-facing; it reads HAGGGSGPGLLEGFS. A helical transmembrane segment spans residues 251 to 271; the sequence is GWAALVVLSQALNGLLMSAVM. Over 272-275 the chain is Lumenal; it reads KHGS. A helical membrane pass occupies residues 276 to 298; it reads SITRLFVVSCSLVVNAVLSAVLL. The Cytoplasmic segment spans residues 299 to 324; the sequence is RLQLTAAFFLATLLIGLAMRLYYGSR.

The protein belongs to the nucleotide-sugar transporter family. SLC35A subfamily. In terms of assembly, found in a complex with SLC35A2 and SLC35A3.

Its subcellular location is the golgi apparatus membrane. The catalysed reaction is CDP-L-ribitol(in) + CDP(out) = CDP-L-ribitol(out) + CDP(in). Functionally, mediates the transport of CDP-ribitol. Does not exhibit CMP-sialic acid, UDP-galactose and UDP-N-acetylglucosamine transport activity. The protein is Probable UDP-sugar transporter protein SLC35A4 of Homo sapiens (Human).